A 1252-amino-acid chain; its full sequence is MQQNSVLLALFFLCFSSGLGSGQPGQRDDLQTLLELKNSFITNPKEEDVLRDWNSGSPSYCNWTGVTCGGREIIGLNLSGLGLTGSISPSIGRFNNLIHIDLSSNRLVGPIPTTLSNLSSSLESLHLFSNLLSGDIPSQLGSLVNLKSLKLGDNELNGTIPETFGNLVNLQMLALASCRLTGLIPSRFGRLVQLQTLILQDNELEGPIPAEIGNCTSLALFAAAFNRLNGSLPAELNRLKNLQTLNLGDNSFSGEIPSQLGDLVSIQYLNLIGNQLQGLIPKRLTELANLQTLDLSSNNLTGVIHEEFWRMNQLEFLVLAKNRLSGSLPKTICSNNTSLKQLFLSETQLSGEIPAEISNCQSLKLLDLSNNTLTGQIPDSLFQLVELTNLYLNNNSLEGTLSSSISNLTNLQEFTLYHNNLEGKVPKEIGFLGKLEIMYLYENRFSGEMPVEIGNCTRLQEIDWYGNRLSGEIPSSIGRLKDLTRLHLRENELVGNIPASLGNCHQMTVIDLADNQLSGSIPSSFGFLTALELFMIYNNSLQGNLPDSLINLKNLTRINFSSNKFNGSISPLCGSSSYLSFDVTENGFEGDIPLELGKSTNLDRLRLGKNQFTGRIPRTFGKISELSLLDISRNSLSGIIPVELGLCKKLTHIDLNNNYLSGVIPTWLGKLPLLGELKLSSNKFVGSLPTEIFSLTNILTLFLDGNSLNGSIPQEIGNLQALNALNLEENQLSGPLPSTIGKLSKLFELRLSRNALTGEIPVEIGQLQDLQSALDLSYNNFTGRIPSTISTLPKLESLDLSHNQLVGEVPGQIGDMKSLGYLNLSYNNLEGKLKKQFSRWQADAFVGNAGLCGSPLSHCNRAGSKNQRSLSPKTVVIISAISSLAAIALMVLVIILFFKQNHDLFKKVRGGNSAFSSNSSSSQAPLFSNGGAKSDIKWDDIMEATHYLNEEFMIGSGGSGKVYKAELKNGETIAVKKILWKDDLMSNKSFNREVKTLGTIRHRHLVKLMGYCSSKADGLNLLIYEYMANGSVWDWLHANENTKKKEVLGWETRLKIALGLAQGVEYLHYDCVPPIVHRDIKSSNVLLDSNIEAHLGDFGLAKILTGNYDTNTESNTMFAGSYGYIAPEYAYSLKATEKSDVYSMGIVLMEIVTGKMPTEAMFDEETDMVRWVETVLDTPPGSEAREKLIDSELKSLLPCEEEAAYQVLEIALQCTKSYPQERPSSRQASEYLLNVFNNRAASYREMQTDTDK.

The N-terminal stretch at 1-22 is a signal peptide; that stretch reads MQQNSVLLALFFLCFSSGLGSG. Over 23–876 the chain is Extracellular; the sequence is QPGQRDDLQT…QRSLSPKTVV (854 aa). N-linked (GlcNAc...) asparagine glycans are attached at residues Asn62, Asn77, and Asn117. 10 LRR repeats span residues 94–118, 120–143, 144–166, 168–190, 191–215, 217–239, 240–263, 265–286, 287–310, and 312–335; these read FNNL…LSNL, SSLE…LGSL, VNLK…TFGN, VNLQ…RFGR, LVQL…IGNC, SLAL…LNRL, KNLQ…LGDL, SIQY…RLTE, LANL…EFWR, and NQLE…ICSN. Asn157 is a glycosylation site (N-linked (GlcNAc...) asparagine). Asn214 and Asn229 each carry an N-linked (GlcNAc...) asparagine glycan. Asn299 carries N-linked (GlcNAc...) asparagine glycosylation. An N-linked (GlcNAc...) asparagine glycan is attached at Asn336. 21 LRR repeats span residues 337 to 360, 361 to 384, 386 to 408, 409 to 433, 435 to 456, 457 to 480, 481 to 504, 506 to 528, 529 to 552, 554 to 575, 577 to 599, 600 to 622, 623 to 648, 650 to 670, 671 to 695, 697 to 719, 720 to 743, 745 to 767, 768 to 792, 793 to 816, and 818 to 839; these read TSLK…ISNC, QSLK…LFQL, ELTN…ISNL, TNLQ…GFLG, LEIM…IGNC, TRLQ…IGRL, KDLT…LGNC, QMTV…FGFL, TALE…LINL, NLTR…LCGS, SYLS…LGKS, TNLD…TFGK, ISEL…GLCK, LTHI…WLGK, LPLL…IFSL, NILT…IGNL, QALN…IGKL, KLFE…IGQL, QDLQ…ISTL, PKLE…IGDM, and SLGY…QFSR. N-linked (GlcNAc...) asparagine glycans are attached at residues Asn370, Asn394, and Asn407. A glycan (N-linked (GlcNAc...) asparagine) is linked at Asn455. Residues Asn538, Asn554, Asn559, and Asn566 are each glycosylated (N-linked (GlcNAc...) asparagine). Asn709 carries N-linked (GlcNAc...) asparagine glycosylation. Residue Asn780 is glycosylated (N-linked (GlcNAc...) asparagine). The N-linked (GlcNAc...) asparagine glycan is linked to Asn823. Residues 877–897 traverse the membrane as a helical segment; it reads IISAISSLAAIALMVLVIILF. Topologically, residues 898-1252 are cytoplasmic; the sequence is FKQNHDLFKK…YREMQTDTDK (355 aa). A Phosphothreonine modification is found at Thr945. The region spanning 948–1232 is the Protein kinase domain; it reads LNEEFMIGSG…PSSRQASEYL (285 aa). Residues 954–962 and Lys976 contribute to the ATP site; that span reads IGSGGSGKV. Phosphotyrosine is present on residues Tyr1024 and Tyr1066. The Proton acceptor role is filled by Asp1079. Ser1114 carries the phosphoserine modification. Phosphotyrosine is present on residues Tyr1124 and Tyr1131.

The protein belongs to the protein kinase superfamily. Ser/Thr protein kinase family. Interacts with CIF1 and CIF2. In terms of tissue distribution, mostly expressed in siliques, seeds, developing embryos and seedlings, detected in flower buds, but not in roots, leaves or stems.

It localises to the cell membrane. It carries out the reaction L-seryl-[protein] + ATP = O-phospho-L-seryl-[protein] + ADP + H(+). It catalyses the reaction L-threonyl-[protein] + ATP = O-phospho-L-threonyl-[protein] + ADP + H(+). Its function is as follows. Together with GSO1, receptor-like serine/threonine-kinase required during the development of the epidermal surface in embryos and cotyledons. Involved in the nuclear division phase of megagametogenesis. In coordination with GSO2, regulates root growth through control of cell division and cell fate specification. Controls seedling root growth by modulating sucrose response after germination. Receptor of the peptide hormones CIF1 and CIF2 required for contiguous Casparian strip diffusion barrier formation in roots. In Arabidopsis thaliana (Mouse-ear cress), this protein is LRR receptor-like serine/threonine-protein kinase GSO2.